Consider the following 311-residue polypeptide: Dermonecrotic toxin LlSicTox-alphaIII1i (311 aa).

The signal sequence occupies residues 1 to 21; that stretch reads MYAHLALILGCWTVVLQGAET. The propeptide occupies 22–26; that stretch reads DVGER. Histidine 38 is an active-site residue. Mg(2+) is bound by residues glutamate 58 and aspartate 60. Histidine 73 functions as the Nucleophile in the catalytic mechanism. Cysteine 77 and cysteine 83 form a disulfide bridge. Residue aspartate 117 coordinates Mg(2+).

The protein belongs to the arthropod phospholipase D family. Class I subfamily. Requires Mg(2+) as cofactor. Expressed by the venom gland.

The protein resides in the secreted. It carries out the reaction an N-(acyl)-sphingosylphosphocholine = an N-(acyl)-sphingosyl-1,3-cyclic phosphate + choline. The enzyme catalyses an N-(acyl)-sphingosylphosphoethanolamine = an N-(acyl)-sphingosyl-1,3-cyclic phosphate + ethanolamine. The catalysed reaction is a 1-acyl-sn-glycero-3-phosphocholine = a 1-acyl-sn-glycero-2,3-cyclic phosphate + choline. It catalyses the reaction a 1-acyl-sn-glycero-3-phosphoethanolamine = a 1-acyl-sn-glycero-2,3-cyclic phosphate + ethanolamine. Dermonecrotic toxins cleave the phosphodiester linkage between the phosphate and headgroup of certain phospholipids (sphingolipid and lysolipid substrates), forming an alcohol (often choline) and a cyclic phosphate. This toxin acts on sphingomyelin (SM) with high activity. It also act on acyl- and alkyl-lysophosphatidylcholine (LPC), but not on sphingosylphosphorylcholine (SPC) and phosphatidylcholine (PC). It may also act on ceramide phosphoethanolamine (CPE), and lysophosphatidylethanolamine (LPE), but not on lysophosphatidylserine (LPS), and lysophosphatidylglycerol (LPG). It acts by transphosphatidylation, releasing exclusively cyclic phosphate products as second products. Induces complement-dependent hemolysis and dermonecrosis. Also induces increased vascular permeability, edema, inflammatory response, and platelet aggregation. This is Dermonecrotic toxin LlSicTox-alphaIII1i from Loxosceles laeta (South American recluse spider).